A 273-amino-acid polypeptide reads, in one-letter code: Putative phosphoenolpyruvate synthase regulatory protein (273 aa).

Residue 153 to 160 (GVSRCGKT) participates in ADP binding.

The protein belongs to the pyruvate, phosphate/water dikinase regulatory protein family. PSRP subfamily.

It catalyses the reaction [pyruvate, water dikinase] + ADP = [pyruvate, water dikinase]-phosphate + AMP + H(+). It carries out the reaction [pyruvate, water dikinase]-phosphate + phosphate + H(+) = [pyruvate, water dikinase] + diphosphate. Bifunctional serine/threonine kinase and phosphorylase involved in the regulation of the phosphoenolpyruvate synthase (PEPS) by catalyzing its phosphorylation/dephosphorylation. This chain is Putative phosphoenolpyruvate synthase regulatory protein, found in Sodalis glossinidius (strain morsitans).